Consider the following 246-residue polypeptide: Ribosomal RNA small subunit methyltransferase J (246 aa).

Residues 115-116 and Asp169 each bind S-adenosyl-L-methionine; that span reads ER.

Belongs to the methyltransferase superfamily. RsmJ family.

Its subcellular location is the cytoplasm. The catalysed reaction is guanosine(1516) in 16S rRNA + S-adenosyl-L-methionine = N(2)-methylguanosine(1516) in 16S rRNA + S-adenosyl-L-homocysteine + H(+). Its function is as follows. Specifically methylates the guanosine in position 1516 of 16S rRNA. The polypeptide is Ribosomal RNA small subunit methyltransferase J (Buchnera aphidicola subsp. Acyrthosiphon pisum (strain APS) (Acyrthosiphon pisum symbiotic bacterium)).